The following is a 296-amino-acid chain: Zinc finger protein 75A (296 aa).

The 66-residue stretch at 1-66 (MYFSQEEWEL…VSPEFKDSAG (66 aa)) folds into the KRAB domain. C2H2-type zinc fingers lie at residues 161–183 (FKCQ…QRIH), 189–211 (YKCQ…LTTH), 217–239 (YKCS…QRTH), 245–267 (FTCH…RRTH), and 273–295 (YTCS…QKLH).

Belongs to the krueppel C2H2-type zinc-finger protein family.

The protein localises to the nucleus. May be involved in transcriptional regulation. The sequence is that of Zinc finger protein 75A (ZNF75A) from Homo sapiens (Human).